Reading from the N-terminus, the 321-residue chain is MNRPERLQPGVKLRDADKVSRIPVKIVPSERDTMLRKPDWLRVKLPASNQRILEIKQALRKNGLHSVCEEASCPNLAECFNHGTATFMILGAICTRRCPFCDVAHGRPLKPDAEEPVKLAQTIRDMKLKYVVITSVDRDDLRDGGAQHFADCIREIRKLNPDIKIETLVPDFRGRIDAALDILSTEPPDVFNHNLETAPMHYRKARPGANYQWSLDLLKRFKERHPNVPTKSGLMMGLGETNDEIAQVLRDLRAHKVEMLTLGQYLQPSKFHLPVERYVPPAEFDELKALADELGFTHAACGPLVRSSYHADLQAQGKEVK.

Cysteine 68, cysteine 73, cysteine 79, cysteine 94, cysteine 98, cysteine 101, and serine 308 together coordinate [4Fe-4S] cluster. A Radical SAM core domain is found at 80 to 297; it reads FNHGTATFMI…KALADELGFT (218 aa).

The protein belongs to the radical SAM superfamily. Lipoyl synthase family. It depends on [4Fe-4S] cluster as a cofactor.

The protein localises to the cytoplasm. It catalyses the reaction [[Fe-S] cluster scaffold protein carrying a second [4Fe-4S](2+) cluster] + N(6)-octanoyl-L-lysyl-[protein] + 2 oxidized [2Fe-2S]-[ferredoxin] + 2 S-adenosyl-L-methionine + 4 H(+) = [[Fe-S] cluster scaffold protein] + N(6)-[(R)-dihydrolipoyl]-L-lysyl-[protein] + 4 Fe(3+) + 2 hydrogen sulfide + 2 5'-deoxyadenosine + 2 L-methionine + 2 reduced [2Fe-2S]-[ferredoxin]. It functions in the pathway protein modification; protein lipoylation via endogenous pathway; protein N(6)-(lipoyl)lysine from octanoyl-[acyl-carrier-protein]: step 2/2. Its function is as follows. Catalyzes the radical-mediated insertion of two sulfur atoms into the C-6 and C-8 positions of the octanoyl moiety bound to the lipoyl domains of lipoate-dependent enzymes, thereby converting the octanoylated domains into lipoylated derivatives. In Shewanella baltica (strain OS185), this protein is Lipoyl synthase.